The primary structure comprises 364 residues: D-alanine--D-alanine ligase (364 aa).

The region spanning 134-344 (KVLLKSFNIP…YESLVDKLIT (211 aa)) is the ATP-grasp domain. 167 to 222 (NNKLNYPVIVKPSVLGSSIGINVAYNVSQIEKYIEEAFEYDLTVVVEKFIKAREIE) provides a ligand contact to ATP. Mg(2+) is bound by residues D297, E311, and N313.

The protein belongs to the D-alanine--D-alanine ligase family. It depends on Mg(2+) as a cofactor. Requires Mn(2+) as cofactor.

It is found in the cytoplasm. It carries out the reaction 2 D-alanine + ATP = D-alanyl-D-alanine + ADP + phosphate + H(+). Its pathway is cell wall biogenesis; peptidoglycan biosynthesis. Cell wall formation. This chain is D-alanine--D-alanine ligase, found in Borrelia recurrentis (strain A1).